The sequence spans 86 residues: Small ribosomal subunit protein uS17 (86 aa).

The protein belongs to the universal ribosomal protein uS17 family. As to quaternary structure, part of the 30S ribosomal subunit.

Its function is as follows. One of the primary rRNA binding proteins, it binds specifically to the 5'-end of 16S ribosomal RNA. The sequence is that of Small ribosomal subunit protein uS17 from Chlamydia pneumoniae (Chlamydophila pneumoniae).